Reading from the N-terminus, the 201-residue chain is Recombination protein RecR (201 aa).

The C4-type zinc finger occupies 57–74; that stretch reads CRICGNITENSVNPCAIC. Positions 82-178 constitute a Toprim domain; the sequence is STVFVVENSR…KVTRLAHGLA (97 aa).

The protein belongs to the RecR family.

Its function is as follows. May play a role in DNA repair. It seems to be involved in an RecBC-independent recombinational process of DNA repair. It may act with RecF and RecO. The sequence is that of Recombination protein RecR from Leuconostoc citreum (strain KM20).